A 333-amino-acid polypeptide reads, in one-letter code: Neuropeptides B/W receptor type 2 (333 aa).

Residues 1-45 (MQAAGHPEPLDSRGSFSLPTMGANVSQDNGTGHNATFSEPLPFLY) are Extracellular-facing. Residues Asn-24, Asn-29, and Asn-34 are each glycosylated (N-linked (GlcNAc...) asparagine). Residues 46 to 69 (VLLPAVYSGICAVGLTGNTAVILV) traverse the membrane as a helical segment. The Cytoplasmic segment spans residues 70 to 80 (ILRAPKMKTVT). A helical transmembrane segment spans residues 81 to 105 (NVFILNLAVADGLFTLVLPVNIAEH). The Extracellular segment spans residues 106–120 (LLQYWPFGELLCKLV). Cys-117 and Cys-197 form a disulfide bridge. A helical membrane pass occupies residues 121 to 140 (LAVDHYNIFSSIYFLAVMSV). Residues 141-165 (DRYLVVLATVRSRHMPWRTYRGAKV) lie on the Cytoplasmic side of the membrane. The chain crosses the membrane as a helical span at residues 166-185 (ASLCVWLGVTVLVLPFFSFA). Over 186 to 211 (GVYSNELQVPSCGLSFPWPEQVWFKA) the chain is Extracellular. The helical transmembrane segment at 212–233 (SRVYTLVLGFVLPVCTICVLYT) threads the bilayer. The Cytoplasmic segment spans residues 234-257 (DLLRRLRAVRLRSGAKALGKARRK). A helical transmembrane segment spans residues 258–282 (VTVLVLVVLAVCLLCWTPFHLASVV). At 283 to 292 (ALTTDLPQTP) the chain is on the extracellular side. The chain crosses the membrane as a helical span at residues 293–307 (LVISMSYVITSLSYA). Residues 308-333 (NSCLNPFLYAFLDDNFRKNFRSILRC) are Cytoplasmic-facing.

This sequence belongs to the G-protein coupled receptor 1 family. Detected at high levels in caudate nucleus, hippocampus and amygdala; at moderate levels in the adult brain, thalamus, parietal cortex, pituitary gland, adrenal gland and lymph nodes.

The protein localises to the cell membrane. In terms of biological role, interacts specifically with a number of opioid ligands. Receptor for neuropeptides B and W, which may be involved in neuroendocrine system regulation, food intake and the organization of other signals. This chain is Neuropeptides B/W receptor type 2 (NPBWR2), found in Homo sapiens (Human).